The sequence spans 132 residues: Spermatogenesis-associated protein 33 (132 aa).

The tract at residues 1–60 is interaction with ATG16L1; it reads MGQSKSKPREKKEEEKSTTTLVTKSKEKVMEKEAKQSDKESQPAESLLFATSKHSRPSSS. The tract at residues 1 to 81 is disordered; it reads MGQSKSKPRE…SKKRSVIPQI (81 aa). A compositionally biased stretch (basic and acidic residues) spans 24 to 42; sequence KSKEKVMEKEAKQSDKESQ. The segment at 61-132 is interaction with VDAC2; it reads SEDKPETKQR…IAAYDVHNTE (72 aa). The PQIIIT signature appears at 79–84; that stretch reads PQIIIT. A Phosphoserine modification is found at Ser-87. The segment at 110-132 is disordered; sequence DWGPYHRHRSPSTIAAYDVHNTE.

Interacts (via PQIIIT motif) with PPP3R2 and PPP3CC. Interacts with VDAC2. Interacts with ATG16L1 (via WD repeats). Interacts with PPP3R1, PPP3CA and PPP3CB. In terms of tissue distribution, predominantly expressed in the testis (at protein level). Expressed in the sperm midpiece (at protein level).

It is found in the cytoplasm. It localises to the cytosol. Its subcellular location is the nucleus. The protein resides in the mitochondrion. In terms of biological role, plays an important role in sperm motility and male fertility. Required for sperm midpiece flexibility and for the localization of sperm calcineurin to the mitochondria. Promotes mitophagy as well as acts as an autophagy mediator in male germline cells. Links damaged mitochondria to autophagosomes via its binding to the outer mitochondrial membrane protein VDAC2, as well as to key autophagy machinery component ATG16L1. This Mus musculus (Mouse) protein is Spermatogenesis-associated protein 33 (Spata33).